The chain runs to 587 residues: Arginine--tRNA ligase (587 aa).

Residues 127–137 (ANPTGPLHVGH) carry the 'HIGH' region motif.

It belongs to the class-I aminoacyl-tRNA synthetase family. In terms of assembly, monomer.

It localises to the cytoplasm. The catalysed reaction is tRNA(Arg) + L-arginine + ATP = L-arginyl-tRNA(Arg) + AMP + diphosphate. The chain is Arginine--tRNA ligase from Dechloromonas aromatica (strain RCB).